Reading from the N-terminus, the 298-residue chain is Lipoyl synthase 1 (298 aa).

[4Fe-4S] cluster contacts are provided by Cys34, Cys39, Cys45, Cys60, Cys64, Cys67, and Ser274. The 218-residue stretch at 46 to 263 (FKAGTATFLI…RRAGEGMGFL (218 aa)) folds into the Radical SAM core domain. The interval 277–298 (AEQVQRLMRSHPRTPKNQHSPE) is disordered.

It belongs to the radical SAM superfamily. Lipoyl synthase family. Requires [4Fe-4S] cluster as cofactor.

The protein resides in the cytoplasm. It carries out the reaction [[Fe-S] cluster scaffold protein carrying a second [4Fe-4S](2+) cluster] + N(6)-octanoyl-L-lysyl-[protein] + 2 oxidized [2Fe-2S]-[ferredoxin] + 2 S-adenosyl-L-methionine + 4 H(+) = [[Fe-S] cluster scaffold protein] + N(6)-[(R)-dihydrolipoyl]-L-lysyl-[protein] + 4 Fe(3+) + 2 hydrogen sulfide + 2 5'-deoxyadenosine + 2 L-methionine + 2 reduced [2Fe-2S]-[ferredoxin]. It functions in the pathway protein modification; protein lipoylation via endogenous pathway; protein N(6)-(lipoyl)lysine from octanoyl-[acyl-carrier-protein]: step 2/2. Its function is as follows. Catalyzes the radical-mediated insertion of two sulfur atoms into the C-6 and C-8 positions of the octanoyl moiety bound to the lipoyl domains of lipoate-dependent enzymes, thereby converting the octanoylated domains into lipoylated derivatives. This chain is Lipoyl synthase 1, found in Gloeobacter violaceus (strain ATCC 29082 / PCC 7421).